A 201-amino-acid chain; its full sequence is MGCSPSKEGNGSFSSTSTSFIHGSESHPEYDMLLKILVIGDSGVGKSCMLLRFADNRFTDSYISTIGVDFCIRTIELDGKKIKLQIWDTAGQERFKTITTSYYRGAHGLIIVYDITSMDSFNSIKRWLIDVDRFASPSVLKLIVGNKCDLNSKRAVDFKIAKKFADELNIPIMETSAKESTAIDEAFIKLASDIKKSTPQK.

Residues 1–20 are disordered; the sequence is MGCSPSKEGNGSFSSTSTSF. The N-myristoyl glycine moiety is linked to residue G2. A lipid anchor (S-palmitoyl cysteine) is attached at C3. Residues 40–48, 58–65, 88–92, 146–149, and 176–178 contribute to the GTP site; these read GDSGVGKSC, FTDSYIST, DTAGQ, NKCD, and SAK. Residues 62–70 carry the Effector region motif; sequence YISTIGVDF.

Belongs to the small GTPase superfamily. Rab family. In terms of processing, although this sequence lacks the C-terminal cysteine motifs subject to isoprenylation in other Rab proteins, it does have N-terminal myristoylation and S-palmitoylation sequence motifs.

The protein is Ras-related protein Rab-1C (Rab1C) of Dictyostelium discoideum (Social amoeba).